We begin with the raw amino-acid sequence, 193 residues long: Calcium-binding protein E63-1 (193 aa).

EF-hand domains lie at valine 35–asparagine 70, valine 71–leucine 106, aspartate 127–proline 162, and leucine 163–leucine 193. Ca(2+)-binding residues include aspartate 48, asparagine 50, aspartate 52, arginine 54, and glutamate 59. 9 residues coordinate Ca(2+): aspartate 140, aspartate 142, asparagine 144, glutamate 151, aspartate 176, aspartate 178, aspartate 180, arginine 182, and glutamate 187.

This chain is Calcium-binding protein E63-1 (Eip63F-1), found in Drosophila melanogaster (Fruit fly).